The chain runs to 149 residues: Endoribonuclease YbeY (149 aa).

Zn(2+) contacts are provided by His-106, His-110, and His-116.

This sequence belongs to the endoribonuclease YbeY family. It depends on Zn(2+) as a cofactor.

Its subcellular location is the cytoplasm. Single strand-specific metallo-endoribonuclease involved in late-stage 70S ribosome quality control and in maturation of the 3' terminus of the 16S rRNA. This is Endoribonuclease YbeY from Methylobacillus flagellatus (strain ATCC 51484 / DSM 6875 / VKM B-1610 / KT).